Here is a 433-residue protein sequence, read N- to C-terminus: Zinc finger protein CONSTANS-LIKE 15 (433 aa).

Zn(2+) is bound by residues Cys-9, Cys-12, Cys-32, His-37, Cys-52, Cys-55, Cys-75, and His-80. The B box-type 1; atypical zinc finger occupies 9–51; sequence CDFCGERTAVLFCRADTAKLCLPCDQQVHTANLLSRKHVRSQI. The segment at 52-94 adopts a B box-type 2; atypical zinc-finger fold; it reads CDNCGNEPVSVRCFTDNLILCQECDWDVHGSCSVSDAHVRSAV. Residues 319 to 353 are disordered; it reads DDYKRSTSGQVQPTKSESNNRPITFGSEKGSNSSS. Positions 324 to 340 are enriched in polar residues; that stretch reads STSGQVQPTKSESNNRP. Residues 374–398 are a coiled coil; it reads TKADLERLAQNRGDAMQRYKEKRKT. The region spanning 385-427 is the CCT domain; the sequence is RGDAMQRYKEKRKTRRYDKTIRYESRKARADTRLRVRGRFVKA.

It belongs to the CONSTANS family.

The protein localises to the nucleus. The protein is Zinc finger protein CONSTANS-LIKE 15 (COL15) of Arabidopsis thaliana (Mouse-ear cress).